We begin with the raw amino-acid sequence, 178 residues long: Conodipine-P1 (178 aa).

A signal peptide spans 1-24; sequence MKLLAPVLWAMAALGVTWLVAVDS. 4-hydroxyproline; partial occurs at positions 38, 42, and 49. Histidine 54 is a catalytic residue. Residues 98–130 constitute a propeptide, interchain peptide; that stretch reads KREVTSHRATSIAHSRLWKTALDQKSFLNRKAR. Position 131 is a pyrrolidone carboxylic acid (glutamine 131). Proline 137 carries the 4-hydroxyproline; partial modification.

Belongs to the phospholipase A2 family. Group IX subfamily. As to quaternary structure, heterodimer of an alpha and a beta chain; probably disulfide-linked. Requires Ca(2+) as cofactor. As to expression, expressed by the venom duct.

The protein localises to the secreted. It carries out the reaction a 1,2-diacyl-sn-glycero-3-phosphocholine + H2O = a 1-acyl-sn-glycero-3-phosphocholine + a fatty acid + H(+). Functionally, catalyzes the calcium-dependent hydrolysis of the 2-acyl groups in 3-sn-phosphoglycerides. The sequence is that of Conodipine-P1 from Conus purpurascens (Purple cone).